Consider the following 293-residue polypeptide: N-acetylmannosamine kinase (293 aa).

ATP contacts are provided by residues 5–12 (AIDIGGTK) and 133–140 (GVGGGLVI). Residues H157, C167, C169, and C174 each coordinate Zn(2+).

The protein belongs to the ROK (NagC/XylR) family. NanK subfamily. Homodimer.

The enzyme catalyses an N-acyl-D-mannosamine + ATP = an N-acyl-D-mannosamine 6-phosphate + ADP + H(+). Its pathway is amino-sugar metabolism; N-acetylneuraminate degradation; D-fructose 6-phosphate from N-acetylneuraminate: step 2/5. Its function is as follows. Catalyzes the phosphorylation of N-acetylmannosamine (ManNAc) to ManNAc-6-P. The polypeptide is N-acetylmannosamine kinase (Vibrio vulnificus (strain CMCP6)).